The sequence spans 428 residues: Enolase (428 aa).

Q163 contacts (2R)-2-phosphoglycerate. E205 serves as the catalytic Proton donor. The Mg(2+) site is built by D242, E285, and D312. Residues K337, R366, S367, and K388 each contribute to the (2R)-2-phosphoglycerate site. K337 acts as the Proton acceptor in catalysis.

The protein belongs to the enolase family. It depends on Mg(2+) as a cofactor.

It is found in the cytoplasm. Its subcellular location is the secreted. The protein localises to the cell surface. It catalyses the reaction (2R)-2-phosphoglycerate = phosphoenolpyruvate + H2O. The protein operates within carbohydrate degradation; glycolysis; pyruvate from D-glyceraldehyde 3-phosphate: step 4/5. In terms of biological role, catalyzes the reversible conversion of 2-phosphoglycerate (2-PG) into phosphoenolpyruvate (PEP). It is essential for the degradation of carbohydrates via glycolysis. This is Enolase from Novosphingobium aromaticivorans (strain ATCC 700278 / DSM 12444 / CCUG 56034 / CIP 105152 / NBRC 16084 / F199).